The primary structure comprises 569 residues: Cell death protein 4 (569 aa).

One can recognise a CARD domain in the interval 1-91 (MLCEIECRAL…HLKDFLDEYL (91 aa)). In terms of domain architecture, NB-ARC spans 116–442 (DRKLLLGNVP…IWSCVIPVDI (327 aa)). ATP-binding positions include Phe131, 162–167 (GSGKSV), and Gln171. Ser166 is a Mg(2+) binding site.

Associates as an asymmetric homodimer with ced-9. Upon release from ced-9, forms an octamer, known as the apoptosome, and interacts with ced-3; the interaction results in ced-3 autoproteolytic cleavage and activation. The octamer (a tetramer of an asymmetric dimer) also interacts with two processed ced-3 to form a stable holoenzyme. Interacts with sex-determining protein fem-1. May form a complex composed of ced-3, ced-4 and mac-1 or of ced-9, ced-4 and mac-1. Within the complex, interacts with ced-4.

It is found in the mitochondrion. The protein resides in the cytoplasm. It localises to the perinuclear region. Its function is as follows. Plays a major role in programmed cell death (PCD, apoptosis). egl-1 binds to and directly inhibits the activity of ced-9, releasing the cell death activator ced-4 from a ced-9/ced-4 containing protein complex and allowing ced-4 to induce caspase ced-3 autoproteolytic cleavage and activation. Also forms a holoenzyme with processed ced-3 enhancing ced-3 activity. Component of the egl-1, ced-9, ced-4 and ced-3 apoptotic signaling cascade required for the initiation of programmed cell death in cells fated to die during embryonic and postembryonic development. During oogenesis, required for germline apoptosis downstream of ced-9 and upstream of ced-3 but independently of egl-1. May regulate germline apoptosis in response to DNA damage, probably downstream of let-60/ras and mpk-1 pathway. Regulates CEP neuron apoptosis in response to high Al(3+) levels. During male tail morphogenesis, promotes apoptosis of the tail-spike cell. During larval development, required for the elimination of transient presynaptic components downstream of egl-1 and ced-9 and upstream of ced-3 apoptotic pathway. Together with ain-1, a component of the miRNA-induced-silencing complex (miRISC), and probably upstream of ced-3, regulates temporal cell fate patterning during larval development. May play a role in resistance to S.typhimurium-mediated infection. The sequence is that of Cell death protein 4 from Caenorhabditis briggsae.